The primary structure comprises 236 residues: MQNVQQPKKRKLSDEIIAEDEDYQRDPEHPRNLIPEICRLLYSQEAMTGSGGAISMRRNDKIYVAPSGVQKERLQPEDMFVINDDGDTLKLPLNGKICRMSQCTPLFLTIYRLRGSECVIHSHSKRAVLATIISSGNEFRISDLQMIKGIYKRTENRNYRFGEEVVIPIIENTPTDPELQENLVKAMENYPDTCCVLIRRHGLYIWGTTWQQAKLMYECYEYLFDIAIQLKQLGMN.

Residues 1 to 29 (MQNVQQPKKRKLSDEIIAEDEDYQRDPEH) are disordered. Cys103 is a substrate binding site. Zn(2+) contacts are provided by His121, His123, and His201.

It belongs to the aldolase class II family. MtnB subfamily. Zn(2+) serves as cofactor.

Its subcellular location is the cytoplasm. The catalysed reaction is 5-(methylsulfanyl)-D-ribulose 1-phosphate = 5-methylsulfanyl-2,3-dioxopentyl phosphate + H2O. It functions in the pathway amino-acid biosynthesis; L-methionine biosynthesis via salvage pathway; L-methionine from S-methyl-5-thio-alpha-D-ribose 1-phosphate: step 2/6. Catalyzes the dehydration of methylthioribulose-1-phosphate (MTRu-1-P) into 2,3-diketo-5-methylthiopentyl-1-phosphate (DK-MTP-1-P). The polypeptide is Probable methylthioribulose-1-phosphate dehydratase (Trichoplax adhaerens (Trichoplax reptans)).